A 123-amino-acid polypeptide reads, in one-letter code: Defensin beta 118 (123 aa).

The first 19 residues, M1–P19, serve as a signal peptide directing secretion. Disulfide bonds link C27-C54, C34-C48, and C38-C55. Residues V65 to S123 constitute a propeptide that is removed on maturation. The segment covering K100–R110 has biased composition (basic and acidic residues). The interval K100–S123 is disordered. Residues T112 to S123 are compositionally biased toward polar residues.

This sequence belongs to the beta-defensin family. In terms of processing, the three-dimensional structure formed by the three intramolecular disulfide bridges is indispensable for antimicrobial activity. As to expression, high-level and epididymis-specific expression. Most abundant in the epithelium of the caput and present in the epididymis lumen and bound to sperm. Also expressed in pancreas.

It localises to the secreted. In terms of biological role, host defense peptide that exhibits antimicrobial activity against both Gram-negative bacteria, such as E.coli and S.typhimurium, and Gram-positive bacteria, such as S.aureus and B.subtilis. Inhibits cell adhesion of E.coli on intestinal epithelial enterocytes. Causes rapid permeabilization of both the outer and inner membrane of E.coli, leading to morphological alterations on the bacterial surface. Binds to bacterial lipopolysaccharides (LPS) with high affinity, and may thereby be involved in immunoregulation through LPS neutralization. May contribute to epididymal innate immunity and protect the sperm against attack by microorganisms. In Homo sapiens (Human), this protein is Defensin beta 118 (DEFB118).